Consider the following 337-residue polypeptide: MLSEASDFNSSGSRSEGSVFSRTEHSVIAAYLIVAGITSILSNVVVLGIFIKYKELRTPTNAVIINLAFTDIGVSSIGYPMSAASDLHGSWKFGHAGCQIYAGLNIFFGMVSIGLLTVVAMDRYLTISCPDVGRRMTTNTYLSMILGAWINGLFWALMPIIGWASYAPDPTGATCTINWRNNDTSFVSYTMMVIVVNFIVPLTVMFYCYYHVSRSLRLYAASDCTAHLHRDWADQADVTKMSVIMILMFLLAWSPYSIVCLWACFGNPKKIPPSMAIIAPLFAKSSTFYNPCIYVAAHKKFRKAMLAMFKCQPHLAVPEPSTLPMDMPQSSLAPVRI.

The Extracellular segment spans residues 1–26; that stretch reads MLSEASDFNSSGSRSEGSVFSRTEHS. Asn9 is a glycosylation site (N-linked (GlcNAc...) asparagine). The chain crosses the membrane as a helical span at residues 27–49; the sequence is VIAAYLIVAGITSILSNVVVLGI. Over 50 to 61 the chain is Cytoplasmic; the sequence is FIKYKELRTPTN. A helical transmembrane segment spans residues 62–87; that stretch reads AVIINLAFTDIGVSSIGYPMSAASDL. Residues 88 to 101 lie on the Extracellular side of the membrane; sequence HGSWKFGHAGCQIY. Cysteines 98 and 175 form a disulfide. Residues 102–121 traverse the membrane as a helical segment; that stretch reads AGLNIFFGMVSIGLLTVVAM. Topologically, residues 122-140 are cytoplasmic; that stretch reads DRYLTISCPDVGRRMTTNT. A helical membrane pass occupies residues 141-164; sequence YLSMILGAWINGLFWALMPIIGWA. Over 165–188 the chain is Extracellular; it reads SYAPDPTGATCTINWRNNDTSFVS. An N-linked (GlcNAc...) asparagine glycan is attached at Asn182. A helical transmembrane segment spans residues 189-212; the sequence is YTMMVIVVNFIVPLTVMFYCYYHV. Residues 213-240 are Cytoplasmic-facing; the sequence is SRSLRLYAASDCTAHLHRDWADQADVTK. A helical membrane pass occupies residues 241–264; that stretch reads MSVIMILMFLLAWSPYSIVCLWAC. Over 265-272 the chain is Extracellular; that stretch reads FGNPKKIP. A helical membrane pass occupies residues 273–297; sequence PSMAIIAPLFAKSSTFYNPCIYVAA. Lys284 is modified (N6-(retinylidene)lysine). The Cytoplasmic segment spans residues 298–337; that stretch reads HKKFRKAMLAMFKCQPHLAVPEPSTLPMDMPQSSLAPVRI.

This sequence belongs to the G-protein coupled receptor 1 family. Opsin subfamily. Found only in the eye, where it is localized to the retinal pigment epithelium (RPE). In the RPE, it is localized to the microvilli that surround the photoreceptor outer segments.

It localises to the membrane. Its function is as follows. May play a role in rpe physiology either by detecting light directly or by monitoring the concentration of retinoids or other photoreceptor-derived compounds. The polypeptide is Visual pigment-like receptor peropsin (Rrh) (Mus musculus (Mouse)).